The sequence spans 155 residues: Small ribosomal subunit protein uS7cz/uS7cy (155 aa).

It belongs to the universal ribosomal protein uS7 family. In terms of assembly, part of the 30S ribosomal subunit.

The protein resides in the plastid. Its subcellular location is the chloroplast. Functionally, one of the primary rRNA binding proteins, it binds directly to 16S rRNA where it nucleates assembly of the head domain of the 30S subunit. The polypeptide is Small ribosomal subunit protein uS7cz/uS7cy (rps7-A) (Phalaenopsis aphrodite subsp. formosana (Moth orchid)).